We begin with the raw amino-acid sequence, 718 residues long: Ribosomal RNA large subunit methyltransferase K/L (718 aa).

The region spanning 43–154 is the THUMP domain; sequence TQYRILLWSR…QDELVVSLDL (112 aa).

It belongs to the methyltransferase superfamily. RlmKL family.

It is found in the cytoplasm. The enzyme catalyses guanosine(2445) in 23S rRNA + S-adenosyl-L-methionine = N(2)-methylguanosine(2445) in 23S rRNA + S-adenosyl-L-homocysteine + H(+). It carries out the reaction guanosine(2069) in 23S rRNA + S-adenosyl-L-methionine = N(2)-methylguanosine(2069) in 23S rRNA + S-adenosyl-L-homocysteine + H(+). Specifically methylates the guanine in position 2445 (m2G2445) and the guanine in position 2069 (m7G2069) of 23S rRNA. In Histophilus somni (strain 129Pt) (Haemophilus somnus), this protein is Ribosomal RNA large subunit methyltransferase K/L.